Reading from the N-terminus, the 156-residue chain is Small ribosomal subunit protein uS7 (156 aa).

The protein belongs to the universal ribosomal protein uS7 family. Part of the 30S ribosomal subunit. Contacts proteins S9 and S11.

Its function is as follows. One of the primary rRNA binding proteins, it binds directly to 16S rRNA where it nucleates assembly of the head domain of the 30S subunit. Is located at the subunit interface close to the decoding center, probably blocks exit of the E-site tRNA. This is Small ribosomal subunit protein uS7 from Macrococcus caseolyticus (strain JCSC5402) (Macrococcoides caseolyticum).